The primary structure comprises 616 residues: Electron transfer flavoprotein-ubiquinone oxidoreductase, mitochondrial (616 aa).

Residues 1-32 (MLVRLTKLSCPAYQWFHALKIKKCLPLCAPRC) constitute a mitochondrion transit peptide. 70–84 (VVIVGAGPAGLSAAI) provides a ligand contact to FAD. At Lys-95 the chain carries N6-acetyllysine. Residues 108–129 (IGAHTLSGACLDPAAFKELFPD) lie within the membrane without spanning it. Lys-131 and Lys-222 each carry N6-acetyllysine. The a ubiquinone site is built by Gly-304 and Gly-305. Residues Lys-356 and Lys-415 each carry the N6-acetyllysine modification. The stretch at 427–446 (AGLHVTEYEDNLKQSWVWKE) is an intramembrane region. Ser-550 carries the post-translational modification Phosphoserine. Residues Cys-560, Cys-585, Cys-588, and Cys-591 each contribute to the [4Fe-4S] cluster site. The 4Fe-4S ferredoxin-type domain occupies 576–605 (FRLQINAQNCVHCKTCDIKDPSQNINWVVP).

The protein belongs to the ETF-QO/FixC family. As to quaternary structure, monomer. [4Fe-4S] cluster serves as cofactor. FAD is required as a cofactor.

It localises to the mitochondrion inner membrane. It catalyses the reaction a ubiquinone + reduced [electron-transfer flavoprotein] = a ubiquinol + oxidized [electron-transfer flavoprotein] + H(+). In terms of biological role, accepts electrons from ETF and reduces ubiquinone. This Rattus norvegicus (Rat) protein is Electron transfer flavoprotein-ubiquinone oxidoreductase, mitochondrial (Etfdh).